A 319-amino-acid chain; its full sequence is Pre T-cell antigen receptor alpha (319 aa).

The N-terminal stretch at 1–16 (MAESWLLLLLALGCPA) is a signal peptide. At 17–160 (LPTEVTTLLR…LRGTRALVLR (144 aa)) the chain is on the extracellular side. An intrachain disulfide couples Cys58 to Cys118. N-linked (GlcNAc...) asparagine glycosylation occurs at Asn78. A helical membrane pass occupies residues 161–181 (LGALRLLLFKLLLLDVLLTCG). Over 182 to 319 (RLHAPPAARG…PPADPSFPGG (138 aa)) the chain is Cytoplasmic. Residues 189–207 (ARGDPAGASGPGAPSLPAP) are compositionally biased toward low complexity. The tract at residues 189–293 (ARGDPAGASG…VLRAWSSGPS (105 aa)) is disordered. The segment covering 260–271 (RRRRVHTRRPRR) has biased composition (basic residues).

Heterodimer with TCRB; disulfide linked. This heterodimer assembles with CD3 proteins into a signaling-competent pre-T-cell receptor complex. Interacts with RHBDD1.

It is found in the membrane. It localises to the cell membrane. Its function is as follows. Component of the pre-T-cell receptor complex (composed of PTCRA, TCRB and the CD3 complex) that has a crucial role in early T-cell development, particularly alpha-beta T cell differentiation. The chain is Pre T-cell antigen receptor alpha (PTCRA) from Bos taurus (Bovine).